We begin with the raw amino-acid sequence, 365 residues long: Flagellar P-ring protein (365 aa).

Positions 1–19 (MIKFLSALILLLVTTAAQA) are cleaved as a signal peptide.

Belongs to the FlgI family. In terms of assembly, the basal body constitutes a major portion of the flagellar organelle and consists of four rings (L,P,S, and M) mounted on a central rod.

The protein localises to the periplasm. It localises to the bacterial flagellum basal body. Its function is as follows. Assembles around the rod to form the L-ring and probably protects the motor/basal body from shearing forces during rotation. This Shigella flexneri serotype 5b (strain 8401) protein is Flagellar P-ring protein.